The following is a 369-amino-acid chain: tRNA-specific 2-thiouridylase MnmA (369 aa).

ATP contacts are provided by residues G11 to S18 and M37. Residues N97–D99 are interaction with target base in tRNA. The active-site Nucleophile is C102. Residues C102 and C199 are joined by a disulfide bond. G127 provides a ligand contact to ATP. The interaction with tRNA stretch occupies residues K149–Q151. Catalysis depends on C199, which acts as the Cysteine persulfide intermediate. The segment at R311–Y312 is interaction with tRNA.

The protein belongs to the MnmA/TRMU family. As to quaternary structure, interacts with TusE.

It is found in the cytoplasm. The catalysed reaction is S-sulfanyl-L-cysteinyl-[protein] + uridine(34) in tRNA + AH2 + ATP = 2-thiouridine(34) in tRNA + L-cysteinyl-[protein] + A + AMP + diphosphate + H(+). Its function is as follows. Catalyzes the 2-thiolation of uridine at the wobble position (U34) of tRNA(Lys), tRNA(Glu) and tRNA(Gln), leading to the formation of s(2)U34, the first step of tRNA-mnm(5)s(2)U34 synthesis. Sulfur is provided by IscS, via a sulfur-relay system. Binds ATP and its substrate tRNAs. The sequence is that of tRNA-specific 2-thiouridylase MnmA from Enterobacter sp. (strain 638).